The sequence spans 382 residues: MPSGCRCLNLVCLLCILGATSQPARADDCSSHCDLAHGCCAPDGSCRCDPGWEGLHCERCVRMPGCQHGTCHQPWQCICHSGWAGKFCDKDEHICTSQSPCQNGGQCVYDGGGEYHCVCLPGFRGRGCERKAGPCEQAGFPCQNGGQCQDNQGFALNFTCRCLAGFMGAHCEVNVDDCLMRPCANGATCIDGINRFSCLCPEGFAGRFCTINLDDCASRPCQRGARCRDRVHDFDCLCPSGYGGKTCELVLPAPDPATIGTPQAPASAVVVPATGSAPHSAGAGLLRISVKEVVRRQEAGLGESSLVALVVFGSLTAALVLATVLLTLRAWRRGICPTGPCCDPAPHYAPARQDQECQVSMLPAGFPLSPDLPPEPGKTTAL.

The signal sequence occupies residues 1–26; it reads MPSGCRCLNLVCLLCILGATSQPARA. EGF-like domains follow at residues 27-58, 62-89, 91-129, and 131-172; these read DDCS…LHCE, RMPG…KFCD, DEHI…RGCE, and KAGP…AHCE. Residues 27–305 are Extracellular-facing; it reads DDCSSHCDLA…RQEAGLGESS (279 aa). 17 disulfide bridges follow: Cys-29/Cys-40, Cys-33/Cys-46, Cys-48/Cys-57, Cys-66/Cys-71, Cys-79/Cys-88, Cys-95/Cys-107, Cys-101/Cys-117, Cys-119/Cys-128, Cys-135/Cys-148, Cys-142/Cys-160, Cys-162/Cys-171, Cys-178/Cys-189, Cys-183/Cys-198, Cys-200/Cys-209, Cys-216/Cys-227, Cys-221/Cys-236, and Cys-238/Cys-247. N-linked (GlcNAc...) asparagine glycosylation occurs at Asn-157. The 37-residue stretch at 174–210 folds into the EGF-like 5; calcium-binding domain; it reads NVDDCLMRPCANGATCIDGINRFSCLCPEGFAGRFCT. Residues 212–248 enclose the EGF-like 6; calcium-binding domain; the sequence is NLDDCASRPCQRGARCRDRVHDFDCLCPSGYGGKTCE. The helical transmembrane segment at 306-326 threads the bilayer; that stretch reads LVALVVFGSLTAALVLATVLL. The Cytoplasmic portion of the chain corresponds to 327 to 382; that stretch reads TLRAWRRGICPTGPCCDPAPHYAPARQDQECQVSMLPAGFPLSPDLPPEPGKTTAL.

It localises to the membrane. Functionally, regulates adipogenesis. This chain is Protein delta homolog 2 (Dlk2), found in Rattus norvegicus (Rat).